A 129-amino-acid polypeptide reads, in one-letter code: Dormancy-associated protein 2 (129 aa).

A signal peptide spans 1 to 25 (MDSRKAMLILGLLAMVLLISSEVSA). Residues 110-129 (GGYHGGGGHGGHGGASNNGN) are disordered.

Belongs to the DRM1/ARP family. Expressed in axilary buds. Detected in growing stems, leaflets and floral organs, but not in roots.

This Pisum sativum (Garden pea) protein is Dormancy-associated protein 2.